The sequence spans 360 residues: UDP-N-acetylglucosamine--N-acetylmuramyl-(pentapeptide) pyrophosphoryl-undecaprenol N-acetylglucosamine transferase (360 aa).

UDP-N-acetyl-alpha-D-glucosamine is bound by residues 16 to 18 (TGG), Asn128, Arg165, Ser191, Ile247, 266 to 271 (ALTVSE), and Gln292.

This sequence belongs to the glycosyltransferase 28 family. MurG subfamily.

It is found in the cell inner membrane. It carries out the reaction di-trans,octa-cis-undecaprenyl diphospho-N-acetyl-alpha-D-muramoyl-L-alanyl-D-glutamyl-meso-2,6-diaminopimeloyl-D-alanyl-D-alanine + UDP-N-acetyl-alpha-D-glucosamine = di-trans,octa-cis-undecaprenyl diphospho-[N-acetyl-alpha-D-glucosaminyl-(1-&gt;4)]-N-acetyl-alpha-D-muramoyl-L-alanyl-D-glutamyl-meso-2,6-diaminopimeloyl-D-alanyl-D-alanine + UDP + H(+). It functions in the pathway cell wall biogenesis; peptidoglycan biosynthesis. Its function is as follows. Cell wall formation. Catalyzes the transfer of a GlcNAc subunit on undecaprenyl-pyrophosphoryl-MurNAc-pentapeptide (lipid intermediate I) to form undecaprenyl-pyrophosphoryl-MurNAc-(pentapeptide)GlcNAc (lipid intermediate II). The polypeptide is UDP-N-acetylglucosamine--N-acetylmuramyl-(pentapeptide) pyrophosphoryl-undecaprenol N-acetylglucosamine transferase (Shewanella amazonensis (strain ATCC BAA-1098 / SB2B)).